The chain runs to 317 residues: tRNA(Ile)-lysidine synthase (317 aa).

32–37 (SGGVDS) contacts ATP.

It belongs to the tRNA(Ile)-lysidine synthase family.

It localises to the cytoplasm. The enzyme catalyses cytidine(34) in tRNA(Ile2) + L-lysine + ATP = lysidine(34) in tRNA(Ile2) + AMP + diphosphate + H(+). Functionally, ligates lysine onto the cytidine present at position 34 of the AUA codon-specific tRNA(Ile) that contains the anticodon CAU, in an ATP-dependent manner. Cytidine is converted to lysidine, thus changing the amino acid specificity of the tRNA from methionine to isoleucine. The polypeptide is tRNA(Ile)-lysidine synthase (Aquifex aeolicus (strain VF5)).